The primary structure comprises 217 residues: Somatotropin (217 aa).

Positions 1 to 26 are cleaved as a signal peptide; sequence MATGSRTSLLLAFGLLCLPWLQEGSA. A Zn(2+)-binding site is contributed by His44. Cys79 and Cys191 are joined by a disulfide. Ser132 bears the Phosphoserine mark. A Deamidated glutamine; by deterioration modification is found at Gln163. Ser176 bears the Phosphoserine mark. Asn178 carries the post-translational modification Deamidated asparagine; by deterioration. Position 200 (Glu200) interacts with Zn(2+). The cysteines at positions 208 and 215 are disulfide-linked.

The protein belongs to the somatotropin/prolactin family. As to quaternary structure, monomer, dimer, trimer, tetramer and pentamer, disulfide-linked or non-covalently associated, in homomeric and heteromeric combinations. Can also form a complex either with GHBP or with the alpha2-macroglobulin complex.

The protein localises to the secreted. Functionally, plays an important role in growth control. Its major role in stimulating body growth is to stimulate the liver and other tissues to secrete IGF1. It stimulates both the differentiation and proliferation of myoblasts. It also stimulates amino acid uptake and protein synthesis in muscle and other tissues. The protein is Somatotropin (GH1) of Homo sapiens (Human).